A 274-amino-acid polypeptide reads, in one-letter code: Penicillin-insensitive murein endopeptidase (274 aa).

The N-terminal stretch at 1–19 (MNKTAIALLALLASSASLA) is a signal peptide. 3 disulfides stabilise this stretch: Cys-44–Cys-265, Cys-187–Cys-235, and Cys-216–Cys-223. Positions 110, 113, 120, 147, 150, and 211 each coordinate Zn(2+). A disordered region spans residues 228 to 265 (LPPPGDGCGAELQSWFAPPKPGTTKPEKKTPPPLPPSC).

It belongs to the peptidase M74 family. In terms of assembly, dimer. Zn(2+) serves as cofactor.

The protein resides in the periplasm. In terms of biological role, murein endopeptidase that cleaves the D-alanyl-meso-2,6-diamino-pimelyl amide bond that connects peptidoglycan strands. Likely plays a role in the removal of murein from the sacculus. This is Penicillin-insensitive murein endopeptidase from Shigella boydii serotype 18 (strain CDC 3083-94 / BS512).